A 146-amino-acid polypeptide reads, in one-letter code: Large ribosomal subunit protein mL49 (146 aa).

The N-terminal 38 residues, 1–38 (MISSCVTRCFGRGKCLPGPATASIYQTIRCISTNSNKA), are a transit peptide targeting the mitochondrion.

This sequence belongs to the mitochondrion-specific ribosomal protein mL49 family. As to quaternary structure, component of the mitochondrial large ribosomal subunit (mt-LSU). Mature yeast 74S mitochondrial ribosomes consist of a small (37S) and a large (54S) subunit. The 37S small subunit contains a 15S ribosomal RNA (15S mt-rRNA) and 34 different proteins. The 54S large subunit contains a 21S rRNA (21S mt-rRNA) and 46 different proteins.

It localises to the mitochondrion. Its function is as follows. Component of the mitochondrial ribosome (mitoribosome), a dedicated translation machinery responsible for the synthesis of mitochondrial genome-encoded proteins, including at least some of the essential transmembrane subunits of the mitochondrial respiratory chain. The mitoribosomes are attached to the mitochondrial inner membrane and translation products are cotranslationally integrated into the membrane. This chain is Large ribosomal subunit protein mL49 (IMG2), found in Saccharomyces cerevisiae (strain ATCC 204508 / S288c) (Baker's yeast).